The chain runs to 229 residues: Urease accessory protein UreF (229 aa).

It belongs to the UreF family. As to quaternary structure, ureD, UreF and UreG form a complex that acts as a GTP-hydrolysis-dependent molecular chaperone, activating the urease apoprotein by helping to assemble the nickel containing metallocenter of UreC. The UreE protein probably delivers the nickel.

The protein localises to the cytoplasm. In terms of biological role, required for maturation of urease via the functional incorporation of the urease nickel metallocenter. This Staphylococcus aureus (strain USA300) protein is Urease accessory protein UreF.